A 128-amino-acid polypeptide reads, in one-letter code: Type III secretion protein HrcQb (128 aa).

Over residues 1–21 (MSTEDLYQEDVEMLDDYEDPS) the composition is skewed to acidic residues. Residues 1 to 57 (MSTEDLYQEDVEMLDDYEDPSTEQHWSEEDGEPSGYATAEPDDHAAQEEQDEPPALD) are disordered. The segment at 50-128 (QDEPPALDSL…LQITRLVTRS (79 aa)) is hrcQb-C. The interval 78 to 81 (RRLD) is dimer-dimer interface.

The protein belongs to the FliN/MopA/SpaO family. As to quaternary structure, homotetramer. The four monomers assemble into two tightly bound homodimers. Interacts with HrcQa.

It localises to the cytoplasm. Component of the type III secretion system, which is required for effector protein delivery, parasitism, and pathogenicity. Probably participates in the formation of a C-ring-like assembly along with HrcQa. This Pseudomonas savastanoi pv. phaseolicola (Pseudomonas syringae pv. phaseolicola) protein is Type III secretion protein HrcQb (hrcQb).